The following is a 292-amino-acid chain: 4-hydroxy-tetrahydrodipicolinate synthase (292 aa).

A pyruvate-binding site is contributed by Thr45. Tyr133 (proton donor/acceptor) is an active-site residue. Lys161 serves as the catalytic Schiff-base intermediate with substrate. Ile203 lines the pyruvate pocket.

The protein belongs to the DapA family. As to quaternary structure, homotetramer; dimer of dimers.

The protein localises to the cytoplasm. The enzyme catalyses L-aspartate 4-semialdehyde + pyruvate = (2S,4S)-4-hydroxy-2,3,4,5-tetrahydrodipicolinate + H2O + H(+). It participates in amino-acid biosynthesis; L-lysine biosynthesis via DAP pathway; (S)-tetrahydrodipicolinate from L-aspartate: step 3/4. Catalyzes the condensation of (S)-aspartate-beta-semialdehyde [(S)-ASA] and pyruvate to 4-hydroxy-tetrahydrodipicolinate (HTPA). This Nitrosomonas europaea (strain ATCC 19718 / CIP 103999 / KCTC 2705 / NBRC 14298) protein is 4-hydroxy-tetrahydrodipicolinate synthase.